The following is a 151-amino-acid chain: uncharacterized protein (151 aa).

The next 4 membrane-spanning stretches (helical) occupy residues 22–42 (IVSI…GFFF), 62–82 (ALFI…TKII), 97–117 (LFAF…ADYF), and 121–141 (IYIP…IELA).

The protein resides in the cell membrane. This is an uncharacterized protein from Bacillus subtilis (strain 168).